Here is a 446-residue protein sequence, read N- to C-terminus: Coagulation factor VII (446 aa).

A signal peptide spans 1-24 (MVPQTHGLLLLYFLLQLQGPLGAV). A propeptide spanning residues 25 to 41 (VFITQEEAHGVLHRQRR) is cleaved from the precursor. In terms of domain architecture, Gla spans 42–86 (ANSLLEELWSSSLERECNEERCSFEEAREIFKSPERTKQFWTIYS). Residues glutamate 47, glutamate 48, glutamate 55, glutamate 57, glutamate 60, glutamate 61, glutamate 66, glutamate 67, glutamate 70, and glutamate 76 each carry the 4-carboxyglutamate modification. Cysteine 58 and cysteine 63 are joined by a disulfide. Residues 87–123 (DGDQCASNPCQNGGTCQDHLKSYVCFCPLDFEGRNCE) enclose the EGF-like 1; calcium-binding domain. 10 cysteine pairs are disulfide-bonded: cysteine 91–cysteine 102, cysteine 96–cysteine 111, cysteine 113–cysteine 122, cysteine 132–cysteine 143, cysteine 139–cysteine 153, cysteine 155–cysteine 168, cysteine 176–cysteine 303, cysteine 200–cysteine 205, cysteine 219–cysteine 235, and cysteine 351–cysteine 370. Serine 93 carries O-linked (Glc...) serine; alternate glycosylation. Serine 93 is a glycosylation site (O-linked (Xyl...) serine; alternate). O-linked (Fuc) threonine glycosylation is present at threonine 101. Residue aspartate 104 is modified to (3R)-3-hydroxyaspartate. One can recognise an EGF-like 2 domain in the interval 128–169 (EQLICANENGDCDQYCRDHVGTKRTCSCHEDYVLQPDEVSCK). A glycan (N-linked (GlcNAc...) asparagine) is linked at asparagine 186. One can recognise a Peptidase S1 domain in the interval 194–433 (IVGGYVCPKG…YIDWLVKYMD (240 aa)). Histidine 234 (charge relay system) is an active-site residue. Residue asparagine 244 is glycosylated (N-linked (GlcNAc...) asparagine). The Charge relay system role is filled by aspartate 283. Aspartate 379 lines the substrate pocket. Cysteine 381 and cysteine 409 form a disulfide bridge. The Charge relay system role is filled by serine 385.

Belongs to the peptidase S1 family. In terms of assembly, heterodimer of a light chain and a heavy chain linked by a disulfide bond. Post-translationally, the vitamin K-dependent, enzymatic carboxylation of some glutamate residues allows the modified protein to bind calcium. The iron and 2-oxoglutarate dependent 3-hydroxylation of aspartate and asparagine is (R) stereospecific within EGF domains. In terms of processing, can be either O-glucosylated or O-xylosylated at Ser-93 by POGLUT1. Plasma.

It is found in the secreted. The enzyme catalyses Selective cleavage of Arg-|-Ile bond in factor X to form factor Xa.. Its function is as follows. Initiates the extrinsic pathway of blood coagulation. Serine protease that circulates in the blood in a zymogen form. Factor VII is converted to factor VIIa by factor Xa, factor XIIa, factor IXa, or thrombin by minor proteolysis. In the presence of tissue factor and calcium ions, factor VIIa then converts factor X to factor Xa by limited proteolysis. Factor VIIa also converts factor IX to factor IXa in the presence of tissue factor and calcium. The chain is Coagulation factor VII (F7) from Rattus norvegicus (Rat).